The chain runs to 132 residues: Fluoride-specific ion channel FluC (132 aa).

4 helical membrane-spanning segments follow: residues 5-25 (LVAI…LGMW), 36-56 (GTLA…ALFA), 68-88 (FVVT…AEMF), and 103-123 (IAVH…TFGA). 2 residues coordinate Na(+): Gly-75 and Thr-78.

Belongs to the fluoride channel Fluc/FEX (TC 1.A.43) family.

The protein localises to the cell inner membrane. It carries out the reaction fluoride(in) = fluoride(out). Na(+) is not transported, but it plays an essential structural role and its presence is essential for fluoride channel function. Functionally, fluoride-specific ion channel. Important for reducing fluoride concentration in the cell, thus reducing its toxicity. In Chromohalobacter salexigens (strain ATCC BAA-138 / DSM 3043 / CIP 106854 / NCIMB 13768 / 1H11), this protein is Fluoride-specific ion channel FluC.